Here is a 213-residue protein sequence, read N- to C-terminus: UPF0502 protein Daro_2469 (213 aa).

The protein belongs to the UPF0502 family.

The protein is UPF0502 protein Daro_2469 of Dechloromonas aromatica (strain RCB).